A 398-amino-acid chain; its full sequence is Cytochrome b (398 aa).

4 helical membrane passes run 38 to 58 (FGSLAGICLVIQIVTGVFLAM), 82 to 104 (WLLRYMHANGASMFFIVVYLHIF), 119 to 139 (VWCLGVVIFLLMIVTAFIGYV), and 185 to 205 (FFSLHYLLPFILVGASLLHLA). Heme b-binding residues include histidine 88 and histidine 102. Residues histidine 189 and histidine 203 each coordinate heme b. Histidine 208 lines the a ubiquinone pocket. 4 consecutive transmembrane segments (helical) span residues 231 to 251 (FYVKDLVGWVAFAIFFSIWIF), 295 to 315 (AGGVAAIALVFISLLALPFFK), 327 to 347 (IYQGIFWLLLADCLLLGWIGC), and 354 to 373 (FVTIGQISSVFFFLFFAITP).

The protein belongs to the cytochrome b family. In terms of assembly, the main subunits of complex b-c1 are: cytochrome b, cytochrome c1 and the Rieske protein. The cofactor is heme b.

Its subcellular location is the mitochondrion inner membrane. Functionally, component of the ubiquinol-cytochrome c reductase complex (complex III or cytochrome b-c1 complex) that is part of the mitochondrial respiratory chain. The b-c1 complex mediates electron transfer from ubiquinol to cytochrome c. Contributes to the generation of a proton gradient across the mitochondrial membrane that is then used for ATP synthesis. The sequence is that of Cytochrome b (MT-CYB) from Triticum aestivum (Wheat).